The sequence spans 75 residues: Putative DNA-directed RNA polymerase subunit omega (75 aa).

It belongs to the RNA polymerase subunit omega family.

The protein localises to the plastid. Its subcellular location is the chloroplast. The catalysed reaction is RNA(n) + a ribonucleoside 5'-triphosphate = RNA(n+1) + diphosphate. Functionally, may be involved in RNA polymerase activity. The sequence is that of Putative DNA-directed RNA polymerase subunit omega (rpoZ) from Porphyra purpurea (Red seaweed).